Reading from the N-terminus, the 181-residue chain is Dual-action ribosomal maturation protein DarP (181 aa).

The segment at 1–24 (MTGIKRPMSQYQDDNEWEDWGPSK) is disordered.

The protein belongs to the DarP family.

It is found in the cytoplasm. Its function is as follows. Member of a network of 50S ribosomal subunit biogenesis factors which assembles along the 30S-50S interface, preventing incorrect 23S rRNA structures from forming. Promotes peptidyl transferase center (PTC) maturation. The protein is Dual-action ribosomal maturation protein DarP of Aeromonas hydrophila subsp. hydrophila (strain ATCC 7966 / DSM 30187 / BCRC 13018 / CCUG 14551 / JCM 1027 / KCTC 2358 / NCIMB 9240 / NCTC 8049).